We begin with the raw amino-acid sequence, 144 residues long: 3-dehydroquinate dehydratase (144 aa).

The active-site Proton acceptor is tyrosine 24. Residues asparagine 76, histidine 82, and aspartate 89 each coordinate substrate. The Proton donor role is filled by histidine 102. Residues 103–104 (LS) and arginine 113 contribute to the substrate site.

It belongs to the type-II 3-dehydroquinase family. In terms of assembly, homododecamer.

The enzyme catalyses 3-dehydroquinate = 3-dehydroshikimate + H2O. It participates in metabolic intermediate biosynthesis; chorismate biosynthesis; chorismate from D-erythrose 4-phosphate and phosphoenolpyruvate: step 3/7. Catalyzes a trans-dehydration via an enolate intermediate. This is 3-dehydroquinate dehydratase from Bordetella avium (strain 197N).